The following is a 211-amino-acid chain: High frequency lysogenization protein HflD homolog (211 aa).

Belongs to the HflD family.

It localises to the cytoplasm. Its subcellular location is the cell membrane. The protein is High frequency lysogenization protein HflD homolog of Buchnera aphidicola subsp. Acyrthosiphon pisum (strain 5A).